A 295-amino-acid polypeptide reads, in one-letter code: Tyrosine recombinase XerC (295 aa).

The Core-binding (CB) domain maps to 1-85 (MQTYLQKYWN…ALRQFLAFLV (85 aa)). One can recognise a Tyr recombinase domain in the interval 106 to 285 (HLPKNINAEQ…NFQHLAEVYD (180 aa)). Catalysis depends on residues arginine 145, lysine 169, histidine 237, arginine 240, and histidine 263. The O-(3'-phospho-DNA)-tyrosine intermediate role is filled by tyrosine 272.

It belongs to the 'phage' integrase family. XerC subfamily. Forms a cyclic heterotetrameric complex composed of two molecules of XerC and two molecules of XerD.

It is found in the cytoplasm. Site-specific tyrosine recombinase, which acts by catalyzing the cutting and rejoining of the recombining DNA molecules. The XerC-XerD complex is essential to convert dimers of the bacterial chromosome into monomers to permit their segregation at cell division. It also contributes to the segregational stability of plasmids. This chain is Tyrosine recombinase XerC, found in Mannheimia succiniciproducens (strain KCTC 0769BP / MBEL55E).